The sequence spans 175 residues: Methylated-DNA--protein-cysteine methyltransferase (175 aa).

Catalysis depends on cysteine 142, which acts as the Nucleophile; methyl group acceptor.

It belongs to the MGMT family.

Its subcellular location is the cytoplasm. It carries out the reaction a 6-O-methyl-2'-deoxyguanosine in DNA + L-cysteinyl-[protein] = S-methyl-L-cysteinyl-[protein] + a 2'-deoxyguanosine in DNA. It catalyses the reaction a 4-O-methyl-thymidine in DNA + L-cysteinyl-[protein] = a thymidine in DNA + S-methyl-L-cysteinyl-[protein]. Functionally, involved in the cellular defense against the biological effects of O6-methylguanine (O6-MeG) and O4-methylthymine (O4-MeT) in DNA. Repairs the methylated nucleobase in DNA by stoichiometrically transferring the methyl group to a cysteine residue in the enzyme. This is a suicide reaction: the enzyme is irreversibly inactivated. The protein is Methylated-DNA--protein-cysteine methyltransferase of Thermococcus sibiricus (strain DSM 12597 / MM 739).